The sequence spans 331 residues: Pantothenate kinase (331 aa).

ATP is bound at residue 109–116; the sequence is GSVAVGKS.

Belongs to the prokaryotic pantothenate kinase family.

It is found in the cytoplasm. The enzyme catalyses (R)-pantothenate + ATP = (R)-4'-phosphopantothenate + ADP + H(+). The protein operates within cofactor biosynthesis; coenzyme A biosynthesis; CoA from (R)-pantothenate: step 1/5. This Rhizobium leguminosarum bv. trifolii (strain WSM2304) protein is Pantothenate kinase.